Consider the following 376-residue polypeptide: Probable tRNA sulfurtransferase (376 aa).

The THUMP domain occupies 51 to 152 (EENLKNLKYV…KNSVYVFDKS (102 aa)). Residues 170 to 171 (LI), 195 to 196 (TF), Arg-252, Gly-274, and Gln-283 contribute to the ATP site.

This sequence belongs to the ThiI family.

The protein resides in the cytoplasm. The enzyme catalyses [ThiI sulfur-carrier protein]-S-sulfanyl-L-cysteine + a uridine in tRNA + 2 reduced [2Fe-2S]-[ferredoxin] + ATP + H(+) = [ThiI sulfur-carrier protein]-L-cysteine + a 4-thiouridine in tRNA + 2 oxidized [2Fe-2S]-[ferredoxin] + AMP + diphosphate. It carries out the reaction [ThiS sulfur-carrier protein]-C-terminal Gly-Gly-AMP + S-sulfanyl-L-cysteinyl-[cysteine desulfurase] + AH2 = [ThiS sulfur-carrier protein]-C-terminal-Gly-aminoethanethioate + L-cysteinyl-[cysteine desulfurase] + A + AMP + 2 H(+). It participates in cofactor biosynthesis; thiamine diphosphate biosynthesis. Catalyzes the ATP-dependent transfer of a sulfur to tRNA to produce 4-thiouridine in position 8 of tRNAs, which functions as a near-UV photosensor. Also catalyzes the transfer of sulfur to the sulfur carrier protein ThiS, forming ThiS-thiocarboxylate. This is a step in the synthesis of thiazole, in the thiamine biosynthesis pathway. The sulfur is donated as persulfide by IscS. This chain is Probable tRNA sulfurtransferase, found in Mycoplasmopsis synoviae (strain 53) (Mycoplasma synoviae).